Consider the following 437-residue polypeptide: Immunoglobulin superfamily member 11 (437 aa).

Positions 1–22 (MTCRGSPLAPLLLFSLHGVAAS) are cleaved as a signal peptide. Positions 23–136 (LEVSESPGSV…DRGGRNIGVT (114 aa)) constitute an Ig-like V-type domain. Topologically, residues 23–241 (LEVSESPGSV…VISPQPRSIG (219 aa)) are extracellular. 2 cysteine pairs are disulfide-bonded: Cys-44–Cys-120 and Cys-165–Cys-215. An N-linked (GlcNAc...) asparagine glycan is attached at Asn-102. An Ig-like C2-type domain is found at 144 to 234 (PSAPHCQIQG…TCLLDLQVIS (91 aa)). Residues 242 to 262 (LIAGAIGTGAVIIIFCIALIL) traverse the membrane as a helical segment. Residues 263-437 (GAFFYWRSKN…PAQSRAGSLV (175 aa)) lie on the Cytoplasmic side of the membrane. An Omega-N-methylarginine modification is found at Arg-379. Residues 382 to 405 (SLPAVSRSNGSVSRKARPPPVPSL) form a disordered region.

Post-translationally, N-glycosylated.

The protein localises to the cell membrane. Functionally, functions as a cell adhesion molecule through homophilic interaction. Stimulates cell growth. The protein is Immunoglobulin superfamily member 11 (IGSF11) of Bos taurus (Bovine).